Here is a 373-residue protein sequence, read N- to C-terminus: NAD-dependent protein deacetylase SIR2rp1 (373 aa).

Positions 12–349 (HALGEPTVEG…LKLAECLGLR (338 aa)) constitute a Deacetylase sirtuin-type domain. NAD(+) is bound by residues 39–59 (GAGASVAAGIPDFRSSDTGIY) and 124–127 (QNID). Catalysis depends on His-144, which acts as the Proton acceptor. Zn(2+)-binding residues include Cys-152, Cys-155, Cys-176, and Cys-179. NAD(+) is bound by residues 216-218 (GTS) and 241-243 (NRE). The tract at residues 263-313 (DAVAKEGRSSSSQSRSPSASARREEGGTEDGSSSPNEEVEDASTSSSSDGY) is disordered. A compositionally biased stretch (low complexity) spans 271–282 (SSSSQSRSPSAS). Cys-335 contacts NAD(+).

Belongs to the sirtuin family. Class I subfamily. Zn(2+) serves as cofactor.

The protein resides in the nucleus. The enzyme catalyses N(6)-acetyl-L-lysyl-[protein] + NAD(+) + H2O = 2''-O-acetyl-ADP-D-ribose + nicotinamide + L-lysyl-[protein]. NAD-dependent deacetylase, which probably acts as a regulator of gene expression believed to help form modified chromatin structures on the genes it regulates. In Leishmania major, this protein is NAD-dependent protein deacetylase SIR2rp1 (SIR2rp1).